The following is a 1068-amino-acid chain: Carbamoyl phosphate synthase large chain (1068 aa).

Residues 1–401 are carboxyphosphate synthetic domain; it reads MPLNKDIKKV…AFLKGIRSLE (401 aa). The ATP site is built by R129, R169, G175, G176, K208, V210, E215, G241, I242, H243, Q284, and E298. Positions 133-327 constitute an ATP-grasp 1 domain; that stretch reads RNVMSRINEP…IAKVAAKIAL (195 aa). Mg(2+) contacts are provided by Q284, E298, and N300. Residues Q284, E298, and N300 each coordinate Mn(2+). Residues 402–549 form an oligomerization domain region; the sequence is IGKYSLEHKK…YSTYDVYDEV (148 aa). The segment at 550 to 932 is carbamoyl phosphate synthetic domain; the sequence is EVSKNKKVIV…ALYKGFIGAN (383 aa). An ATP-grasp 2 domain is found at 674 to 864; that stretch reads DELLEKLQIS…IVDIATRVML (191 aa). ATP-binding residues include R710, K749, L751, E755, G780, V781, H782, S783, Q823, and E835. Positions 823, 835, and 837 each coordinate Mg(2+). Mn(2+) is bound by residues Q823, E835, and N837. The MGS-like domain occupies 933 to 1068; that stretch reads MSIKKEKGTI…ETLHIFDLSN (136 aa). The allosteric domain stretch occupies residues 933-1068; the sequence is MSIKKEKGTI…ETLHIFDLSN (136 aa).

This sequence belongs to the CarB family. As to quaternary structure, composed of two chains; the small (or glutamine) chain promotes the hydrolysis of glutamine to ammonia, which is used by the large (or ammonia) chain to synthesize carbamoyl phosphate. Tetramer of heterodimers (alpha,beta)4. It depends on Mg(2+) as a cofactor. Requires Mn(2+) as cofactor.

It catalyses the reaction hydrogencarbonate + L-glutamine + 2 ATP + H2O = carbamoyl phosphate + L-glutamate + 2 ADP + phosphate + 2 H(+). It carries out the reaction hydrogencarbonate + NH4(+) + 2 ATP = carbamoyl phosphate + 2 ADP + phosphate + 2 H(+). It functions in the pathway amino-acid biosynthesis; L-arginine biosynthesis; carbamoyl phosphate from bicarbonate: step 1/1. It participates in pyrimidine metabolism; UMP biosynthesis via de novo pathway; (S)-dihydroorotate from bicarbonate: step 1/3. Large subunit of the glutamine-dependent carbamoyl phosphate synthetase (CPSase). CPSase catalyzes the formation of carbamoyl phosphate from the ammonia moiety of glutamine, carbonate, and phosphate donated by ATP, constituting the first step of 2 biosynthetic pathways, one leading to arginine and/or urea and the other to pyrimidine nucleotides. The large subunit (synthetase) binds the substrates ammonia (free or transferred from glutamine from the small subunit), hydrogencarbonate and ATP and carries out an ATP-coupled ligase reaction, activating hydrogencarbonate by forming carboxy phosphate which reacts with ammonia to form carbamoyl phosphate. This chain is Carbamoyl phosphate synthase large chain, found in Clostridium botulinum (strain Loch Maree / Type A3).